Consider the following 81-residue polypeptide: Photosystem I iron-sulfur center (81 aa).

4Fe-4S ferredoxin-type domains lie at 2-31 (SHTV…MVPW) and 37-68 (GQIA…VRVY). [4Fe-4S] cluster is bound by residues cysteine 11, cysteine 14, cysteine 17, cysteine 21, cysteine 48, cysteine 51, cysteine 54, and cysteine 58.

As to quaternary structure, the eukaryotic PSI reaction center is composed of at least 11 subunits. [4Fe-4S] cluster is required as a cofactor.

The protein resides in the plastid. It is found in the chloroplast thylakoid membrane. It catalyses the reaction reduced [plastocyanin] + hnu + oxidized [2Fe-2S]-[ferredoxin] = oxidized [plastocyanin] + reduced [2Fe-2S]-[ferredoxin]. Apoprotein for the two 4Fe-4S centers FA and FB of photosystem I (PSI); essential for photochemical activity. FB is the terminal electron acceptor of PSI, donating electrons to ferredoxin. The C-terminus interacts with PsaA/B/D and helps assemble the protein into the PSI complex. Required for binding of PsaD and PsaE to PSI. PSI is a plastocyanin/cytochrome c6-ferredoxin oxidoreductase, converting photonic excitation into a charge separation, which transfers an electron from the donor P700 chlorophyll pair to the spectroscopically characterized acceptors A0, A1, FX, FA and FB in turn. This Phaeodactylum tricornutum (strain CCAP 1055/1) protein is Photosystem I iron-sulfur center.